The chain runs to 308 residues: Oxygen-dependent coproporphyrinogen-III oxidase (308 aa).

Ser-100 contacts substrate. The a divalent metal cation site is built by His-104 and His-114. The active-site Proton donor is His-114. 116–118 (NFR) contributes to the substrate binding site. A divalent metal cation contacts are provided by His-153 and His-183. The important for dimerization stretch occupies residues 248-283 (YVEFNLVFDRGTIFGLQSGGRTESILSSMPPMATWK). Residue 266-268 (GGR) coordinates substrate.

This sequence belongs to the aerobic coproporphyrinogen-III oxidase family. Homodimer. It depends on a divalent metal cation as a cofactor.

It is found in the cytoplasm. The catalysed reaction is coproporphyrinogen III + O2 + 2 H(+) = protoporphyrinogen IX + 2 CO2 + 2 H2O. It functions in the pathway porphyrin-containing compound metabolism; protoporphyrin-IX biosynthesis; protoporphyrinogen-IX from coproporphyrinogen-III (O2 route): step 1/1. Its function is as follows. Involved in the heme biosynthesis. Catalyzes the aerobic oxidative decarboxylation of propionate groups of rings A and B of coproporphyrinogen-III to yield the vinyl groups in protoporphyrinogen-IX. The sequence is that of Oxygen-dependent coproporphyrinogen-III oxidase from Francisella philomiragia subsp. philomiragia (strain ATCC 25017 / CCUG 19701 / FSC 153 / O#319-036).